Reading from the N-terminus, the 271-residue chain is Aspartate/glutamate leucyltransferase (271 aa).

Belongs to the R-transferase family. Bpt subfamily.

Its subcellular location is the cytoplasm. The catalysed reaction is N-terminal L-glutamyl-[protein] + L-leucyl-tRNA(Leu) = N-terminal L-leucyl-L-glutamyl-[protein] + tRNA(Leu) + H(+). It catalyses the reaction N-terminal L-aspartyl-[protein] + L-leucyl-tRNA(Leu) = N-terminal L-leucyl-L-aspartyl-[protein] + tRNA(Leu) + H(+). Functionally, functions in the N-end rule pathway of protein degradation where it conjugates Leu from its aminoacyl-tRNA to the N-termini of proteins containing an N-terminal aspartate or glutamate. This Acinetobacter baumannii (strain SDF) protein is Aspartate/glutamate leucyltransferase.